Reading from the N-terminus, the 92-residue chain is Long neurotoxin 73 (92 aa).

The signal sequence occupies residues 1–21 (MKTLLLTLVVVTIVCLDLGDS). Cystine bridges form between Cys24/Cys41, Cys34/Cys62, Cys47/Cys51, Cys66/Cys77, and Cys78/Cys83.

This sequence belongs to the three-finger toxin family. Long-chain subfamily. Type II alpha-neurotoxin sub-subfamily. As to expression, expressed by the venom gland.

The protein resides in the secreted. Its function is as follows. Binds with high affinity to muscular (alpha-1/CHRNA1) and neuronal (alpha-7/CHRNA7) nicotinic acetylcholine receptor (nAChR) and inhibits acetylcholine from binding to the receptor, thereby impairing neuromuscular and neuronal transmission. The protein is Long neurotoxin 73 of Drysdalia coronoides (White-lipped snake).